Here is a 544-residue protein sequence, read N- to C-terminus: CTP synthase (544 aa).

The segment at 1–265 (MTKFIFVTGG…DNIITEQLQL (265 aa)) is amidoligase domain. Position 13 (serine 13) interacts with CTP. Residue serine 13 coordinates UTP. ATP contacts are provided by residues 14–19 (SLGKGI) and aspartate 71. Mg(2+) contacts are provided by aspartate 71 and glutamate 139. CTP-binding positions include 146–148 (DIE), 186–191 (KTKPTQ), and lysine 222. UTP-binding positions include 186-191 (KTKPTQ) and lysine 222. In terms of domain architecture, Glutamine amidotransferase type-1 spans 290 to 544 (KIAMVGKYVD…VKAALNNKKA (255 aa)). Glycine 353 contributes to the L-glutamine binding site. Residue cysteine 380 is the Nucleophile; for glutamine hydrolysis of the active site. Residues 381–384 (LGMQ), glutamate 404, and arginine 471 contribute to the L-glutamine site. Catalysis depends on residues histidine 517 and glutamate 519.

It belongs to the CTP synthase family. Homotetramer.

The catalysed reaction is UTP + L-glutamine + ATP + H2O = CTP + L-glutamate + ADP + phosphate + 2 H(+). It carries out the reaction L-glutamine + H2O = L-glutamate + NH4(+). The enzyme catalyses UTP + NH4(+) + ATP = CTP + ADP + phosphate + 2 H(+). It functions in the pathway pyrimidine metabolism; CTP biosynthesis via de novo pathway; CTP from UDP: step 2/2. Its activity is regulated as follows. Allosterically activated by GTP, when glutamine is the substrate; GTP has no effect on the reaction when ammonia is the substrate. The allosteric effector GTP functions by stabilizing the protein conformation that binds the tetrahedral intermediate(s) formed during glutamine hydrolysis. Inhibited by the product CTP, via allosteric rather than competitive inhibition. Catalyzes the ATP-dependent amination of UTP to CTP with either L-glutamine or ammonia as the source of nitrogen. Regulates intracellular CTP levels through interactions with the four ribonucleotide triphosphates. This chain is CTP synthase, found in Neisseria meningitidis serogroup C / serotype 2a (strain ATCC 700532 / DSM 15464 / FAM18).